Reading from the N-terminus, the 446-residue chain is Light-independent protochlorophyllide reductase subunit N (446 aa).

Positions 22, 47, and 107 each coordinate [4Fe-4S] cluster.

It belongs to the BchN/ChlN family. Protochlorophyllide reductase is composed of three subunits; ChlL, ChlN and ChlB. Forms a heterotetramer of two ChlB and two ChlN subunits. [4Fe-4S] cluster is required as a cofactor.

It localises to the plastid. The protein resides in the chloroplast. The enzyme catalyses chlorophyllide a + oxidized 2[4Fe-4S]-[ferredoxin] + 2 ADP + 2 phosphate = protochlorophyllide a + reduced 2[4Fe-4S]-[ferredoxin] + 2 ATP + 2 H2O. It participates in porphyrin-containing compound metabolism; chlorophyll biosynthesis (light-independent). Component of the dark-operative protochlorophyllide reductase (DPOR) that uses Mg-ATP and reduced ferredoxin to reduce ring D of protochlorophyllide (Pchlide) to form chlorophyllide a (Chlide). This reaction is light-independent. The NB-protein (ChlN-ChlB) is the catalytic component of the complex. This is Light-independent protochlorophyllide reductase subunit N from Mesostigma viride (Green alga).